We begin with the raw amino-acid sequence, 445 residues long: MNHEQSRALYDRALSVLSGGVNSSVRATRPYPFFVEKGDGGHVIDADGNRYIDFVMGYGPLLLGHSLPEQVQSAIQQHAAEGPMYGAPTEVEVELAEFVTRHVPSVEMLRFVNSGTEATVSAVRLARGYTGRDKIVVMQSGYHGAQESTLVEGEGDHTAPSSPGIPESFAEHTLTVPFNDEEAAHEVFEEHGDDIAAVLTEPILGNYGIVHPVEGYHDTLRQLCDDHGSLLIFDEVITGFRVGGLQCAQGAFDIDPDITTFGKIVGGGFPVGAIGGKSEIIEQFTPAGDVFQSGTFSGHPVTMAAGLETLRYAAEHDVYGHVNDLGERLRAGLQDILEDQAPEYTVVGRDSMFKVIFTRDGPDSLEGQCEAGCQQQESCPRFEYCPKTGHDVTQAETERWERLFWPAMKDQGVFLTANQFESQFICDAHTGEDIENALEAYKEAI.

Lysine 263 is modified (N6-(pyridoxal phosphate)lysine).

The protein belongs to the class-III pyridoxal-phosphate-dependent aminotransferase family. HemL subfamily. Requires pyridoxal 5'-phosphate as cofactor.

The protein localises to the cytoplasm. The enzyme catalyses (S)-4-amino-5-oxopentanoate = 5-aminolevulinate. Its pathway is porphyrin-containing compound metabolism; protoporphyrin-IX biosynthesis; 5-aminolevulinate from L-glutamyl-tRNA(Glu): step 2/2. The sequence is that of Glutamate-1-semialdehyde 2,1-aminomutase from Haloarcula marismortui (strain ATCC 43049 / DSM 3752 / JCM 8966 / VKM B-1809) (Halobacterium marismortui).